Reading from the N-terminus, the 113-residue chain is Class I hydrophobin fvh1 (113 aa).

A signal peptide spans 1 to 20 (MVSFRAFTVAASLFATLAAA). 4 disulfides stabilise this stretch: cysteine 34–cysteine 94, cysteine 41–cysteine 88, cysteine 42–cysteine 75, and cysteine 95–cysteine 108. N-linked (GlcNAc...) asparagine glycosylation is present at asparagine 35. Residue asparagine 97 is glycosylated (N-linked (GlcNAc...) asparagine).

It belongs to the fungal hydrophobin family. As to quaternary structure, self-assembles to form functional amyloid fibrils called rodlets. Self-assembly into fibrillar rodlets occurs spontaneously at hydrophobic:hydrophilic interfaces and the rodlets further associate laterally to form amphipathic monolayers.

It localises to the secreted. It is found in the cell wall. In terms of biological role, aerial growth, conidiation, and dispersal of filamentous fungi in the environment rely upon a capability of their secreting small amphipathic proteins called hydrophobins (HPBs) with low sequence identity. Class I can self-assemble into an outermost layer of rodlet bundles on aerial cell surfaces, conferring cellular hydrophobicity that supports fungal growth, development and dispersal; whereas Class II form highly ordered films at water-air interfaces through intermolecular interactions but contribute nothing to the rodlet structure. Fvh1 is a class I hydrophobin involved in fruiting body initiation. In Flammulina velutipes (Agaricus velutipes), this protein is Class I hydrophobin fvh1.